The sequence spans 135 residues: MAAPKSTATRARRGRRVVKKNVTQGHAYIKSTFNNTIVSITDPKGHVISWASSGQVGFKGSRKSTPFAAQLAAESAARKAMEHGMKKVDVFVKGPGSGRETAIRSLSTAGLEVGTIADVTPQPHNGCRPPKRRRV.

This sequence belongs to the universal ribosomal protein uS11 family. In terms of assembly, part of the 30S ribosomal subunit. Interacts with proteins S7 and S18. Binds to IF-3.

Functionally, located on the platform of the 30S subunit, it bridges several disparate RNA helices of the 16S rRNA. Forms part of the Shine-Dalgarno cleft in the 70S ribosome. In Corynebacterium urealyticum (strain ATCC 43042 / DSM 7109), this protein is Small ribosomal subunit protein uS11.